We begin with the raw amino-acid sequence, 329 residues long: Phenylalanine--tRNA ligase alpha subunit (329 aa).

Glutamate 254 is a Mg(2+) binding site.

This sequence belongs to the class-II aminoacyl-tRNA synthetase family. Phe-tRNA synthetase alpha subunit type 1 subfamily. In terms of assembly, tetramer of two alpha and two beta subunits. It depends on Mg(2+) as a cofactor.

Its subcellular location is the cytoplasm. The catalysed reaction is tRNA(Phe) + L-phenylalanine + ATP = L-phenylalanyl-tRNA(Phe) + AMP + diphosphate + H(+). The protein is Phenylalanine--tRNA ligase alpha subunit of Histophilus somni (strain 129Pt) (Haemophilus somnus).